A 906-amino-acid chain; its full sequence is MPLRLDIKRKLTARSDRVKSVDLHPTEPWMLASLYNGSVCVWNHETQTLVKTFEVCDLPVRAAKFVARKNWVVTGADDMQIRVFNYNTLERVHMFEAHSDYIRCIAVHPTQPFILTSSDDMLIKLWDWDKKWSCSQVFEGHTHYVMQIVINPKDNNQFASASLDRTIKVWQLGSSSPNFTLEGHEKGVNCIDYYSGGDKPYLISGADDRLVKIWDYQNKTCVQTLEGHAQNVSCASFHPELPIIITGSEDGTVRIWHSSTYRLESTLNYGMERVWCVASLRGSNNVALGYDEGSIIVKLGREEPAMSMDANGKIIWAKHSEVQQANLKAMGDAEIKDGERLPLAVKDMGSCEIYPQTIQHNPNGRFVVVCGDGEYIIYTAMALRNKSFGSAQEFAWAHDSSEYAIRESNSVVKIFKNFKEKKSFKPDFGAESIYGGFLLGVRSVNGLAFYDWENTELIRRIEIQPKHIFWSDSGELVCIATEESFFILKYLSEKVLAAQETHEGVTEDGIEDGFEVLGEIQEIVKTGLWVGDCFIYTSSVNRLNYYVGGEIVTIAHLDRTMYLLGYIPKDNRLYLGDKELNIVSYSLLVSVLEYQTAVMRRDFSMADKVLPTIPKEQRTRVAHFLEKQGFKQQALTVSTDPEHRFELALQLGELKIAYQLAVEAESEQKWKQLAELAISKCQFGLAQECLHHAQDYGGLLLLATASGNASMVNKLAEGAERDGKNNVAFMSYFLQGKLDACLELLIRTGRLPEAAFLARTYLPSQVSRVVKLWRENLSKVNQKAAESLADPTEYENLFPGLKEAFVVEEWVKETHADLWPAKQYPLVTPNEERNVMEEAKGFQPSRSAAQQELDGKPASPTPVIVTSQTANKEEKSLLELEVDLDNLEIEDIDTTDINLDEDILDD.

WD repeat units follow at residues 13–52 (ARSDRVKSVDLHPTEPWMLASLYNGSVCVWNHETQTLVKT), 55–94 (VCDLPVRAAKFVARKNWVVTGADDMQIRVFNYNTLERVHM), 97–136 (AHSDYIRCIAVHPTQPFILTSSDDMLIKLWDWDKKWSCSQ), 140–180 (GHTH…PNFT), 183–224 (GHEK…CVQT), 227–266 (GHAQNVSCASFHPELPIIITGSEDGTVRIWHSSTYRLEST), 350–388 (SCEIYPQTIQHNPNGRFVVVCGDGEYIIYTAMALRNKSF), and 390–425 (SAQEFAWAHDSSEYAIRESNSVVKIFKNFKEKKSFK). K627 is subject to N6-acetyllysine. One copy of the WD 9 repeat lies at 746–783 (IRTGRLPEAAFLARTYLPSQVSRVVKLWRENLSKVNQK). Positions 837–872 (EEAKGFQPSRSAAQQELDGKPASPTPVIVTSQTANK) are disordered. The residue at position 859 (S859) is a Phosphoserine. T861 carries the phosphothreonine modification. Residues 866–891 (TSQTANKEEKSLLELEVDLDNLEIED) adopt a coiled-coil conformation.

Belongs to the WD repeat COPB2 family. Oligomeric complex that consists of at least the alpha, beta, beta', gamma, delta, epsilon and zeta subunits. Probably interacts with PEX11A. Interacts with SCYL1. Interacts with JAGN1.

It localises to the cytoplasm. The protein resides in the cytosol. The protein localises to the golgi apparatus membrane. Its subcellular location is the cytoplasmic vesicle. It is found in the COPI-coated vesicle membrane. In terms of biological role, the coatomer is a cytosolic protein complex that binds to dilysine motifs and reversibly associates with Golgi non-clathrin-coated vesicles, which further mediate biosynthetic protein transport from the ER, via the Golgi up to the trans Golgi network. Coatomer complex is required for budding from Golgi membranes, and is essential for the retrograde Golgi-to-ER transport of dilysine-tagged proteins. In mammals, the coatomer can only be recruited by membranes associated to ADP-ribosylation factors (ARFs), which are small GTP-binding proteins; the complex also influences the Golgi structural integrity, as well as the processing, activity, and endocytic recycling of LDL receptors. Its function is as follows. This coatomer complex protein, essential for Golgi budding and vesicular trafficking, is a selective binding protein (RACK) for protein kinase C, epsilon type. It binds to Golgi membranes in a GTP-dependent manner. This is Coatomer subunit beta' (COPB2) from Bos taurus (Bovine).